The sequence spans 122 residues: Large ribosomal subunit protein uL14 (122 aa).

Belongs to the universal ribosomal protein uL14 family. Part of the 50S ribosomal subunit. Forms a cluster with proteins L3 and L19. In the 70S ribosome, L14 and L19 interact and together make contacts with the 16S rRNA in bridges B5 and B8.

Functionally, binds to 23S rRNA. Forms part of two intersubunit bridges in the 70S ribosome. The sequence is that of Large ribosomal subunit protein uL14 from Corynebacterium kroppenstedtii (strain DSM 44385 / JCM 11950 / CIP 105744 / CCUG 35717).